An 80-amino-acid chain; its full sequence is Calmodulin (80 aa).

2 EF-hand domains span residues 12–47 and 48–80; these read DSEEEIREAFRVFDKDGNGFISAAELRHVMTNLGEK and LTDEEVDEMIREADIDGDGQVNYEEFVAMMTSK. D25, D27, N29, E36, D61, D63, D65, Q67, and E72 together coordinate Ca(2+).

This sequence belongs to the calmodulin family.

Calmodulin mediates the control of a large number of enzymes, ion channels and other proteins by Ca(2+). Among the enzymes to be stimulated by the calmodulin-Ca(2+) complex are a number of protein kinases and phosphatases. This Strongylocentrotus purpuratus (Purple sea urchin) protein is Calmodulin.